A 337-amino-acid chain; its full sequence is tRNA N6-adenosine threonylcarbamoyltransferase (337 aa).

Fe cation is bound by residues histidine 111 and histidine 115. Substrate is bound by residues 134-138 (LVSGG), aspartate 167, glycine 180, and asparagine 272. Position 300 (aspartate 300) interacts with Fe cation.

The protein belongs to the KAE1 / TsaD family. Fe(2+) serves as cofactor.

Its subcellular location is the cytoplasm. The enzyme catalyses L-threonylcarbamoyladenylate + adenosine(37) in tRNA = N(6)-L-threonylcarbamoyladenosine(37) in tRNA + AMP + H(+). Required for the formation of a threonylcarbamoyl group on adenosine at position 37 (t(6)A37) in tRNAs that read codons beginning with adenine. Is involved in the transfer of the threonylcarbamoyl moiety of threonylcarbamoyl-AMP (TC-AMP) to the N6 group of A37, together with TsaE and TsaB. TsaD likely plays a direct catalytic role in this reaction. The chain is tRNA N6-adenosine threonylcarbamoyltransferase from Aeromonas salmonicida (strain A449).